The following is a 472-amino-acid chain: Eukaryotic translation initiation factor 2 subunit 3 (472 aa).

Ala-2 is subject to N-acetylalanine. Ser-16 is modified (phosphoserine). In terms of domain architecture, tr-type G spans 39-248 (QATINIGTIG…IVKKIPVPPR (210 aa)). The tract at residues 48–55 (GHVAHGKS) is G1. Residue 51-56 (AHGKST) participates in GTP binding. The interval 76 to 80 (NITIK) is G2. The segment at 134–137 (DCPG) is G3. GTP contacts are provided by residues 190–193 (NKID) and 225–227 (SAQ). The G4 stretch occupies residues 190 to 193 (NKID). Residues 225-227 (SAQ) form a G5 region. The tract at residues 457-469 (GQIRRGVTIKPTV) is interacts with CDC123.

Belongs to the TRAFAC class translation factor GTPase superfamily. Classic translation factor GTPase family. EIF2G subfamily. In terms of assembly, eukaryotic translation initiation factor 2 eIF2 is a heterotrimeric complex composed of an alpha (EIF2S1), a beta (EIF2S2) and a gamma (EIF2S3) chain. eIF2 is member of the 43S pre-initiation complex (43S PIC). Interacts (via C-terminus) with CDC123; the interaction is direct.

The protein resides in the cytoplasm. It is found in the cytosol. It carries out the reaction GTP + H2O = GDP + phosphate + H(+). Member of the eIF2 complex that functions in the early steps of protein synthesis by forming a ternary complex with GTP and initiator tRNA. This complex binds to a 40S ribosomal subunit, followed by mRNA binding to form the 43S pre-initiation complex (43S PIC). Junction of the 60S ribosomal subunit to form the 80S initiation complex is preceded by hydrolysis of the GTP bound to eIF2 and release of an eIF2-GDP binary complex. In order for eIF2 to recycle and catalyze another round of initiation, the GDP bound to eIF2 must exchange with GTP by way of a reaction catalyzed by eIF-2B. The sequence is that of Eukaryotic translation initiation factor 2 subunit 3 (EIF2S3) from Bos taurus (Bovine).